A 524-amino-acid chain; its full sequence is Germ cell-less protein-like 1 (524 aa).

The tract at residues 1-37 is disordered; it reads MGALSSRVLRPAGRTEQPEPTPGAGGAARRSDAGEDA. The Nuclear localization signal motif lies at 47-53; that stretch reads GRKRKRS. Positions 63–83 are disordered; it reads DSETDDDEDEGDEQQRLLNTP. At S64 the chain carries Phosphoserine. Residues 65-74 show a composition bias toward acidic residues; the sequence is ETDDDEDEGD. At T66 the chain carries Phosphothreonine. The Nuclear localization signal motif lies at 83-89; that stretch reads PRRKKLK. In terms of domain architecture, BTB spans 106 to 176; that stretch reads SDIKICALGE…LYRDDVLIKP (71 aa).

Interacts with TMPO-Beta, TSG101 and TFDP2. Interacts with EMD. Ubiquitously expressed at low levels throughout development and in adult tissues.

It is found in the nucleus matrix. Functionally, possible function in spermatogenesis. Enhances the degradation of MDM2 and increases the amount of p53 probably by modulating the nucleocytoplasmic transport. This chain is Germ cell-less protein-like 1 (Gmcl1), found in Mus musculus (Mouse).